We begin with the raw amino-acid sequence, 826 residues long: Ubiquitin carboxyl-terminal hydrolase 16 (826 aa).

A UBP-type zinc finger spans residues 22–142; it reads PMCRHIRKGL…QVVDYVRKQA (121 aa). Positions 24, 26, 48, 51, 74, 77, 82, 90, 94, 103, 116, and 119 each coordinate Zn(2+). Lysine 140 participates in a covalent cross-link: Glycyl lysine isopeptide (Lys-Gly) (interchain with G-Cter in SUMO2). Residues 146 to 190 are disordered; it reads TPKPAEKDNGNIELENKKLEKESKNEQEREKKENMAKENPPMNSP. Over residues 149–181 the composition is skewed to basic and acidic residues; that stretch reads PAEKDNGNIELENKKLEKESKNEQEREKKENMA. Serine 189 bears the Phosphoserine mark. Positions 196–825 constitute a USP domain; the sequence is KGLSNLGNTC…QAYLLFYERI (630 aa). Residue cysteine 205 is the Nucleophile of the active site. The segment covering 394–408 has biased composition (basic and acidic residues); the sequence is SGKKSVNDKNLKKTM. The disordered stretch occupies residues 394–460; the sequence is SGKKSVNDKN…AKNQRRQQKI (67 aa). Over residues 409–420 the composition is skewed to acidic residues; sequence EDEDQDSEEEKD. Position 415 is a phosphoserine (serine 415). A compositionally biased stretch (basic and acidic residues) spans 421–430; it reads NDSYIKERSD. A compositionally biased stretch (basic residues) spans 438-458; the sequence is HLQKKAKKQAKKQAKNQRRQQ. Residue serine 552 is modified to Phosphoserine. Threonine 557 carries the post-translational modification Phosphothreonine. The active-site Proton acceptor is histidine 761.

The protein belongs to the peptidase C19 family. USP16 subfamily. Homotetramer. Associates with late pre-40S ribosomes. Interacts with CEP78; promoting deubiquitination of tektins. Phosphorylated at the onset of mitosis and dephosphorylated during the metaphase/anaphase transition. Phosphorylation by AURKB enhances the deubiquitinase activity.

It localises to the nucleus. The catalysed reaction is Thiol-dependent hydrolysis of ester, thioester, amide, peptide and isopeptide bonds formed by the C-terminal Gly of ubiquitin (a 76-residue protein attached to proteins as an intracellular targeting signal).. In terms of biological role, specifically deubiquitinates 'Lys-120' of histone H2A (H2AK119Ub), a specific tag for epigenetic transcriptional repression, thereby acting as a coactivator. Deubiquitination of histone H2A is a prerequisite for subsequent phosphorylation at 'Ser-11' of histone H3 (H3S10ph), and is required for chromosome segregation when cells enter into mitosis. In resting B- and T-lymphocytes, phosphorylation by AURKB leads to enhance its activity, thereby maintaining transcription in resting lymphocytes. Regulates Hox gene expression via histone H2A deubiquitination. Prefers nucleosomal substrates. Does not deubiquitinate histone H2B. Also deubiquitinates non-histone proteins, such as ribosomal protein RPS27A: deubiquitination of monoubiquitinated RPS27A promotes maturation of the 40S ribosomal subunit. Also mediates deubiquitination of tektin proteins (TEKT1, TEKT2, TEK3, TEKT4 and TEKT5), promoting their stability. In Macaca fascicularis (Crab-eating macaque), this protein is Ubiquitin carboxyl-terminal hydrolase 16.